Here is a 288-residue protein sequence, read N- to C-terminus: MKLLTASVTPFLPDHSIDFLSFENLLRFQERESHGVVLLGSTGESLSMTAKEKESLVSYACSLNLKVPIIVGVPGTSLHEASEWIHTCQSYPIYGFLITTPIYTKPGVHGQTLWFESLLNKANKPAILYNIPSRSGTTLYLDTVRSLAAHPFFYGLKDSGGSIKHCQEYAQMSSDFVLYCGDDGLWPQMYECGARGLISVLSNIWPKEAREWVEDPHHQYRADLWREVSSWLNQTTNPIAIKALLAYKQVIAHNTLRLPLSIQDLQCAESIPEIIKKMAQWKYSCAHV.

Threonine 42 contacts pyruvate. Tyrosine 129 acts as the Proton donor/acceptor in catalysis. Lysine 157 acts as the Schiff-base intermediate with substrate in catalysis. Isoleucine 198 serves as a coordination point for pyruvate.

It belongs to the DapA family. Homotetramer; dimer of dimers.

It localises to the cytoplasm. It catalyses the reaction L-aspartate 4-semialdehyde + pyruvate = (2S,4S)-4-hydroxy-2,3,4,5-tetrahydrodipicolinate + H2O + H(+). Its pathway is amino-acid biosynthesis; L-lysine biosynthesis via DAP pathway; (S)-tetrahydrodipicolinate from L-aspartate: step 3/4. Catalyzes the condensation of (S)-aspartate-beta-semialdehyde [(S)-ASA] and pyruvate to 4-hydroxy-tetrahydrodipicolinate (HTPA). This chain is 4-hydroxy-tetrahydrodipicolinate synthase, found in Chlamydia abortus (strain DSM 27085 / S26/3) (Chlamydophila abortus).